The chain runs to 637 residues: 1-deoxy-D-xylulose-5-phosphate synthase (637 aa).

Thiamine diphosphate is bound by residues His82 and 123-125 (GHA). Asp154 contributes to the Mg(2+) binding site. Residues 155–156 (GS), Asn183, Tyr295, and Glu378 each bind thiamine diphosphate. Asn183 is a binding site for Mg(2+).

Belongs to the transketolase family. DXPS subfamily. Homodimer. Requires Mg(2+) as cofactor. The cofactor is thiamine diphosphate.

It catalyses the reaction D-glyceraldehyde 3-phosphate + pyruvate + H(+) = 1-deoxy-D-xylulose 5-phosphate + CO2. It participates in metabolic intermediate biosynthesis; 1-deoxy-D-xylulose 5-phosphate biosynthesis; 1-deoxy-D-xylulose 5-phosphate from D-glyceraldehyde 3-phosphate and pyruvate: step 1/1. Catalyzes the acyloin condensation reaction between C atoms 2 and 3 of pyruvate and glyceraldehyde 3-phosphate to yield 1-deoxy-D-xylulose-5-phosphate (DXP). This is 1-deoxy-D-xylulose-5-phosphate synthase from Lawsonia intracellularis (strain PHE/MN1-00).